We begin with the raw amino-acid sequence, 218 residues long: Telomere repeats-binding bouquet formation protein 2 (218 aa).

Residues H117–E143 form a disordered region.

Belongs to the TERB2 family. Component of the MAJIN-TERB1-TERB2 complex, composed of MAJIN, TERB1 and TERB2. As to expression, specifically expressed in germline tissues.

The protein localises to the chromosome. It is found in the telomere. Its subcellular location is the nucleus inner membrane. Functionally, meiosis-specific telomere-associated protein involved in meiotic telomere attachment to the nucleus inner membrane, a crucial step for homologous pairing and synapsis. Component of the MAJIN-TERB1-TERB2 complex, which promotes telomere cap exchange by mediating attachment of telomeric DNA to the inner nuclear membrane and replacement of the protective cap of telomeric chromosomes: in early meiosis, the MAJIN-TERB1-TERB2 complex associates with telomeric DNA and the shelterin/telosome complex. During prophase, the complex matures and promotes release of the shelterin/telosome complex from telomeric DNA. The chain is Telomere repeats-binding bouquet formation protein 2 from Mus musculus (Mouse).